Here is a 644-residue protein sequence, read N- to C-terminus: Exoribonuclease 2 (644 aa).

The RNB domain maps to arginine 189–lysine 516. In terms of domain architecture, S1 motif spans asparagine 561–alanine 643.

It belongs to the RNR ribonuclease family. RNase II subfamily.

The protein localises to the cytoplasm. The catalysed reaction is Exonucleolytic cleavage in the 3'- to 5'-direction to yield nucleoside 5'-phosphates.. Functionally, involved in mRNA degradation. Hydrolyzes single-stranded polyribonucleotides processively in the 3' to 5' direction. The polypeptide is Exoribonuclease 2 (Salmonella agona (strain SL483)).